The primary structure comprises 149 residues: Large ribosomal subunit protein bL9 (149 aa).

This sequence belongs to the bacterial ribosomal protein bL9 family.

Functionally, binds to the 23S rRNA. This Fusobacterium nucleatum subsp. nucleatum (strain ATCC 25586 / DSM 15643 / BCRC 10681 / CIP 101130 / JCM 8532 / KCTC 2640 / LMG 13131 / VPI 4355) protein is Large ribosomal subunit protein bL9.